Consider the following 128-residue polypeptide: Large ribosomal subunit protein bL17 (128 aa).

The protein belongs to the bacterial ribosomal protein bL17 family. In terms of assembly, part of the 50S ribosomal subunit. Contacts protein L32.

In Klebsiella pneumoniae (strain 342), this protein is Large ribosomal subunit protein bL17.